Consider the following 325-residue polypeptide: Chain length determinant protein (325 aa).

The Cytoplasmic segment spans residues 1–31 (MRVENNNVSGQNLDPEQIDLIDLLVQLWRGK). Residues 32 to 52 (MTIIISVIVAIVLAIGYLVVA) traverse the membrane as a helical segment. The Periplasmic segment spans residues 53–294 (KEKWTSTAIV…LPIRRDSPKK (242 aa)). Residues 295-315 (AITLILAVLLGGMVGAGIVLG) form a helical membrane-spanning segment. The Cytoplasmic portion of the chain corresponds to 316-325 (RNALRNYNAK).

This sequence belongs to the WzzB/Cld/Rol family.

It is found in the cell inner membrane. The protein operates within bacterial outer membrane biogenesis; lipopolysaccharide biosynthesis. Functionally, confers a modal distribution of chain length on the O-antigen component of lipopolysaccharide (LPS). Gives rise to a reduced number of short chain molecules and increases in numbers of longer molecules, with a modal value of 13 (in strain O111/M92) and of 17 (in strain K12). This Escherichia coli protein is Chain length determinant protein (wzzB).